A 245-amino-acid chain; its full sequence is UPF0280 protein UNCMA_16740 (245 aa).

It belongs to the UPF0280 family.

This is UPF0280 protein UNCMA_16740 from Methanocella arvoryzae (strain DSM 22066 / NBRC 105507 / MRE50).